Here is a 290-residue protein sequence, read N- to C-terminus: 33 kDa chaperonin (290 aa).

2 disulfides stabilise this stretch: cysteine 235-cysteine 237 and cysteine 268-cysteine 271.

It belongs to the HSP33 family. Under oxidizing conditions two disulfide bonds are formed involving the reactive cysteines. Under reducing conditions zinc is bound to the reactive cysteines and the protein is inactive.

Its subcellular location is the cytoplasm. Functionally, redox regulated molecular chaperone. Protects both thermally unfolding and oxidatively damaged proteins from irreversible aggregation. Plays an important role in the bacterial defense system toward oxidative stress. The protein is 33 kDa chaperonin of Streptococcus pneumoniae serotype 19F (strain G54).